The following is a 369-amino-acid chain: C-C chemokine receptor type 9 (369 aa).

Over 1–48 the chain is Extracellular; sequence MTPTDFTSPIPNMADDYGSESTSSMEDYVNFNFTDFYCEKNNVRQFAS. A glycan (N-linked (GlcNAc...) asparagine) is linked at Asn-32. Intrachain disulfides connect Cys-38-Cys-289 and Cys-119-Cys-198. The chain crosses the membrane as a helical span at residues 49–74; it reads HFLPPLYWLVFIVGALGNSLVILVYW. Residues 75–85 lie on the Cytoplasmic side of the membrane; sequence YCTRVKTMTDM. A helical membrane pass occupies residues 86–109; the sequence is FLLNLAIADLLFLVTLPFWAIAAA. The Extracellular portion of the chain corresponds to 110–120; sequence DQWKFQTFMCK. The helical transmembrane segment at 121–150 threads the bilayer; sequence VVNSMYKMNFYSCVLLIMCISVDRYIAIAQ. Residues 151–159 lie on the Cytoplasmic side of the membrane; the sequence is AMRAHTWRE. A helical transmembrane segment spans residues 160 to 185; it reads KRLLYSKMVCFTIWVLAAALCIPEIL. Over 186–208 the chain is Extracellular; it reads YSQIKEESGIAICTMVYPSDEST. A helical transmembrane segment spans residues 209–243; sequence KLKSAVLTLKVILGFFLPFVVMACCYTIIIHTLIQ. Residues 244–248 are Cytoplasmic-facing; the sequence is AKKSS. Residues 249-283 traverse the membrane as a helical segment; sequence KHKALKVTITVLTVFVLSQFPYNCILLVQTIDAYA. The Extracellular portion of the chain corresponds to 284–290; the sequence is MFISNCA. A helical membrane pass occupies residues 291–321; the sequence is VSTNIDICFQVTQTIAFFHSCLNPVLYVFVG. Topologically, residues 322-369 are cytoplasmic; that stretch reads ERFRRDLVKTLKNLGCISQAQWVSFTRREGSLKLSSMLLETTSGALSL.

The protein belongs to the G-protein coupled receptor 1 family. In terms of tissue distribution, highly expressed in the thymus and low in lymph nodes and spleen.

It is found in the cell membrane. Its function is as follows. Receptor for chemokine SCYA25/TECK. Subsequently transduces a signal by increasing the intracellular calcium ions level. In terms of biological role, (Microbial infection) Alternative coreceptor with CD4 for HIV-1 infection. This Homo sapiens (Human) protein is C-C chemokine receptor type 9 (CCR9).